Here is a 279-residue protein sequence, read N- to C-terminus: Movement protein (279 aa).

This sequence belongs to the cucumovirus movement protein family.

Its subcellular location is the host cell junction. It is found in the host plasmodesma. Transports viral genome to neighboring plant cells directly through plasmosdesmata, without any budding. The movement protein allows efficient cell to cell propagation, by bypassing the host cell wall barrier. Acts by forming a tubular structure at the host plasmodesmata, enlarging it enough to allow free passage of virion capsids. The protein is Movement protein of Cucumber mosaic virus (strain As) (CMV).